A 120-amino-acid polypeptide reads, in one-letter code: Inner membrane protein YidG (120 aa).

Residues 1–21 (MPDSRKARRIADPGLQPERTS) are Cytoplasmic-facing. A helical membrane pass occupies residues 22 to 39 (LAWFRTMLGYGALMALAI). The Periplasmic segment spans residues 40 to 48 (KHNWHQAGM). Residues 49–68 (LFWISIGILAIVALILWHYT) traverse the membrane as a helical segment. The Cytoplasmic segment spans residues 69-90 (RNRNLMDVTNSDFSQFHVVRDK). A helical membrane pass occupies residues 91-113 (FLISLAVLSLAILFAVTHIHQLI). The Periplasmic portion of the chain corresponds to 114 to 120 (VFIERVA).

It is found in the cell inner membrane. This Escherichia coli O157:H7 protein is Inner membrane protein YidG (yidG).